A 170-amino-acid chain; its full sequence is Thioredoxin-like protein YneN (170 aa).

A helical transmembrane segment spans residues 5-23 (WLAGILLIMLVGYTGWNLY). The 138-residue stretch at 33-170 (IQEGQQAPDF…KEMEQKLDLD (138 aa)) folds into the Thioredoxin domain. Cysteines 71 and 74 form a disulfide.

It belongs to the thioredoxin family.

It is found in the cell membrane. In Bacillus subtilis (strain 168), this protein is Thioredoxin-like protein YneN (yneN).